The following is a 340-amino-acid chain: Beta-ketoacyl-[acyl-carrier-protein] synthase III (340 aa).

Residues C122 and H260 contribute to the active site. The interval 261–265 is ACP-binding; the sequence is QANTR. The active site involves N291.

It belongs to the thiolase-like superfamily. FabH family. Homodimer.

It localises to the cytoplasm. The enzyme catalyses malonyl-[ACP] + acetyl-CoA + H(+) = 3-oxobutanoyl-[ACP] + CO2 + CoA. It functions in the pathway lipid metabolism; fatty acid biosynthesis. Catalyzes the condensation reaction of fatty acid synthesis by the addition to an acyl acceptor of two carbons from malonyl-ACP. Catalyzes the first condensation reaction which initiates fatty acid synthesis and may therefore play a role in governing the total rate of fatty acid production. Possesses both acetoacetyl-ACP synthase and acetyl transacylase activities. Its substrate specificity determines the biosynthesis of branched-chain and/or straight-chain of fatty acids. In Mycobacteroides abscessus (strain ATCC 19977 / DSM 44196 / CCUG 20993 / CIP 104536 / JCM 13569 / NCTC 13031 / TMC 1543 / L948) (Mycobacterium abscessus), this protein is Beta-ketoacyl-[acyl-carrier-protein] synthase III.